The following is a 409-amino-acid chain: Nucleoprotein (409 aa).

4 disordered regions span residues 1 to 32 (MASG…SSGN), 46 to 68 (IPPP…SQQH), 164 to 196 (RSGR…EDDL), and 238 to 258 (VDQV…DDKM). Over residues 15–31 (PVIKLGGPKPPKVGSSG) the composition is skewed to low complexity. Positions 29 to 160 (SSGNASWFQA…GNFRWDFIPL (132 aa)) are RNA-binding. In terms of domain architecture, CoV N NTD spans 31 to 156 (GNASWFQAIK…GGPDGNFRWD (126 aa)). Low complexity predominate over residues 166-179 (GRSTAASSAASSRA). Basic and acidic residues-rich tracts occupy residues 180–192 (PSRE…RSGS) and 247–258 (KGKEGNFGDDKM). 2 positions are modified to phosphoserine; by host: serine 190 and serine 192. Positions 215–331 (TKAKADEMAH…QCVDGVGTRP (117 aa)) constitute a CoV N CTD domain. Residues 226–333 (RYCKRTIPPN…VDGVGTRPKD (108 aa)) form a dimerization region. Cysteine 320 and cysteine 323 are disulfide-bonded. The interval 326–409 (GVGTRPKDDE…GDAALGENEL (84 aa)) is disordered. The segment covering 358-367 (QRPKKEKKPK) has biased composition (basic residues). The span at 368–384 (KHDDEVDKALTSDEERN) shows a compositional bias: basic and acidic residues. Threonine 378 is subject to Phosphothreonine; by host. Serine 379 is modified (phosphoserine; by host).

This sequence belongs to the gammacoronavirus nucleocapsid protein family. As to quaternary structure, homooligomer. Both monomeric and oligomeric forms interact with RNA. Interacts with protein M. Interacts with NSP3; this interaction serves to tether the genome to the newly translated replicase-transcriptase complex at a very early stage of infection. Post-translationally, ADP-ribosylated. The ADP-ribosylation is retained in the virion during infection. Phosphorylated on serine and threonine residues.

Its subcellular location is the virion. The protein resides in the host endoplasmic reticulum-Golgi intermediate compartment. It is found in the host Golgi apparatus. Packages the positive strand viral genome RNA into a helical ribonucleocapsid (RNP) and plays a fundamental role during virion assembly through its interactions with the viral genome and membrane protein M. Plays an important role in enhancing the efficiency of subgenomic viral RNA transcription as well as viral replication. The chain is Nucleoprotein from Avian infectious bronchitis virus (strain M41) (IBV).